Here is a 104-residue protein sequence, read N- to C-terminus: Small ribosomal subunit protein uS10 (104 aa).

The protein belongs to the universal ribosomal protein uS10 family. As to quaternary structure, part of the 30S ribosomal subunit.

In terms of biological role, involved in the binding of tRNA to the ribosomes. The protein is Small ribosomal subunit protein uS10 of Albidiferax ferrireducens (strain ATCC BAA-621 / DSM 15236 / T118) (Rhodoferax ferrireducens).